We begin with the raw amino-acid sequence, 119 residues long: Early E3 13.3 kDa protein (119 aa).

The sequence is that of Early E3 13.3 kDa protein from Canine adenovirus serotype 1 (strain Utrecht) (CAdV-1).